Consider the following 2556-residue polypeptide: Non-reducing polyketide synthase tazA (2556 aa).

The segment at 16 to 270 is N-terminal acylcarrier protein transacylase domain (SAT); it reads LFGPQALSFT…QAIGLRGRFH (255 aa). The active-site Nucleophile; for transacylase activity is the Cys-143. The Proton donor/acceptor; for transacylase activity role is filled by His-270. A Ketosynthase family 3 (KS3) domain is found at 397–769; the sequence is EDEIAVIGMA…GSNASMIVTQ (373 aa). A malonyl-CoA:ACP transacylase (MAT) domain region spans residues 876-1209; it reads CFGGQISRFV…WAHHCTQAPA (334 aa). An N-terminal hotdog fold region spans residues 1254-1383; sequence YTFVGYQDEG…GQIIFQSAAE (130 aa). A PKS/mFAS DH domain is found at 1254-1560; the sequence is YTFVGYQDEG…YSRLPKSTMS (307 aa). The product template (PT) domain stretch occupies residues 1257-1564; the sequence is VGYQDEGKRQ…PKSTMSKMLT (308 aa). Residue His-1285 is the Proton acceptor; for dehydratase activity of the active site. Positions 1408–1560 are C-terminal hotdog fold; the sequence is DPDDVLQGRN…YSRLPKSTMS (153 aa). Asp-1465 functions as the Proton donor; for dehydratase activity in the catalytic mechanism. The disordered stretch occupies residues 1567 to 1621; it reads TAPSERRAQVDSPSMPASINAPPSASEQAPVEPAPQTKESAPIAEPGAGGQSNSK. The span at 1577 to 1593 shows a compositional bias: polar residues; it reads DSPSMPASINAPPSASE. The Carrier domain occupies 1620-1694; it reads SKVPGIVVEV…DVVQCVHKTL (75 aa). An O-(pantetheine 4'-phosphoryl)serine modification is found at Ser-1654. The tract at residues 1700-1731 is disordered; the sequence is SAAQESEGNLTPASSGTQSPRSDPVSDTSLSD. The span at 1702-1731 shows a compositional bias: polar residues; that stretch reads AQESEGNLTPASSGTQSPRSDPVSDTSLSD. Residues 1830–2107 are methyltransferase domain; that stretch reads LEHEGRLIDI…DWTDGHLAEN (278 aa). The NADPH-binding (R) domain stretch occupies residues 2180 to 2424; the sequence is VTGATGSLGA…WTPVDVVAST (245 aa).

It depends on pantetheine 4'-phosphate as a cofactor.

The protein operates within secondary metabolite biosynthesis. Non-reducing polyketide synthase; part of the gene cluster that mediates the biosynthesis of azaterrilone A and other azaphilones, a class of fungal metabolites characterized by a highly oxygenated pyrano-quinone bicyclic core and exhibiting a broad range of bioactivities. The first step of the pathway begins with tazA that assembles one acetyl-CoA starter unit, five malonyl-CoA units, and catalyzes a series of Claisen condensations, methylation, PT-mediated cyclization, and finally releases the first hexaketide precursor through the R-domain. The tazA product then undergoes reduction on its terminal ketone and the following pyran-ring formation by yet undetermined enzyme(s). Dehydration and enoyl reduction, possibly involving the trans-enoyl reductase tazE leads to the next intermediate. TazD is predicted as an acetyltransferase and might catalyze the acetylation steps leading to the synthesis of azaterrilone A. Azaterrilone A is not the final product of the taz pathway and both the highly reducing polyketide synthase tazB and the dual enzyme tazHJ catalyze late steps of the pathway, leading to the production of the 2 final stereoisomers that contain additional polyketide modification whose structures have still to be determined. The polypeptide is Non-reducing polyketide synthase tazA (Aspergillus terreus (strain NIH 2624 / FGSC A1156)).